Consider the following 250-residue polypeptide: 2,3-bisphosphoglycerate-dependent phosphoglycerate mutase (250 aa).

Residues Arg10, His11, Asn17, Gly24, Arg62, Glu89, Tyr92, Lys100, Arg116, Arg117, His184, Gly185, and Asn186 each coordinate (2R)-2,3-bisphosphoglycerate. Catalysis depends on His11, which acts as the Tele-phosphohistidine intermediate. Gly24 is a (2R)-3-phosphoglycerate binding site. (2R)-3-phosphoglycerate-binding residues include Glu89, Tyr92, Lys100, Arg116, and Arg117. The Proton donor/acceptor role is filled by Glu89. A (2R)-3-phosphoglycerate-binding site is contributed by Asn186.

It belongs to the phosphoglycerate mutase family. BPG-dependent PGAM subfamily. As to expression, ubiquitously expressed with the highest expression in the sub-tegumental muscle layer (at protein level). Expressed in the tegument (at protein level).

It is found in the tegument. The catalysed reaction is (2R)-2-phosphoglycerate = (2R)-3-phosphoglycerate. It participates in carbohydrate degradation; glycolysis; pyruvate from D-glyceraldehyde 3-phosphate: step 3/5. With respect to regulation, strongly activated by 2,3-bisphosphoglycerate (2,3-BPG). Inhibited by vanadate in a dose-dependent manner. Catalyzes interconversion of 3- and 2-phosphoglycerate with 2,3-bisphosphoglycerate (2,3-BPG) as the primer of the reaction. Schistosomula have significant surface phosphoglycerate mutase activity also without 2,3-BPG. Binds human plasminogen and enhances its conversion to active thrombolytic plasmin in the presence of human tissue plasminogen activator (tPA) in vitro. Host-interactive surface protein, which may degrade vascular blood clots surrounding the worm in vivo and thus may help survival of the parasite in its host microenvironment. The chain is 2,3-bisphosphoglycerate-dependent phosphoglycerate mutase from Schistosoma mansoni (Blood fluke).